The following is a 592-amino-acid chain: Probable 6-phosphofructo-2-kinase C222.13c (592 aa).

A disordered region spans residues 1 to 80 (MSNTGSARTE…PANDVEKMEV (80 aa)). Residues 57–66 (SIFKREELTP) are compositionally biased toward basic and acidic residues. 150–157 (GIPATGKS) is a binding site for ATP. Residues Asp235 and Cys266 contribute to the active site. A beta-D-fructose 6-phosphate-binding site is contributed by Arg300. The active-site Proton donor is His527.

Its subcellular location is the cytoplasm. The protein localises to the nucleus. The catalysed reaction is beta-D-fructose 6-phosphate + ATP = beta-D-fructose 2,6-bisphosphate + ADP + H(+). Functionally, synthesis of fructose 2,6-bisphosphate. This Schizosaccharomyces pombe (strain 972 / ATCC 24843) (Fission yeast) protein is Probable 6-phosphofructo-2-kinase C222.13c.